Here is a 308-residue protein sequence, read N- to C-terminus: Cytochrome b (308 aa).

The next 4 membrane-spanning stretches (helical) occupy residues 1 to 21, 45 to 66, 81 to 101, and 146 to 166; these read FGLL…LLAA, WLIR…YLHI, WNIG…GYVX, and FFAL…VHLT. The heme b site is built by His51 and His65. Residues His150 and His164 each contribute to the heme b site. His169 is a binding site for a ubiquinone. The next 3 membrane-spanning stretches (helical) occupy residues 194–214, 256–276, and 288–308; these read TKDV…ALFS, LGGV…PFLH, and LSQI…WVSN.

This sequence belongs to the cytochrome b family. As to quaternary structure, the cytochrome bc1 complex contains 11 subunits: 3 respiratory subunits (MT-CYB, CYC1 and UQCRFS1), 2 core proteins (UQCRC1 and UQCRC2) and 6 low-molecular weight proteins (UQCRH/QCR6, UQCRB/QCR7, UQCRQ/QCR8, UQCR10/QCR9, UQCR11/QCR10 and a cleavage product of UQCRFS1). This cytochrome bc1 complex then forms a dimer. Requires heme b as cofactor.

The protein resides in the mitochondrion inner membrane. Component of the ubiquinol-cytochrome c reductase complex (complex III or cytochrome b-c1 complex) that is part of the mitochondrial respiratory chain. The b-c1 complex mediates electron transfer from ubiquinol to cytochrome c. Contributes to the generation of a proton gradient across the mitochondrial membrane that is then used for ATP synthesis. The protein is Cytochrome b (MT-CYB) of Pomatostomus ruficeps (Chestnut-crowned babbler).